The primary structure comprises 254 residues: 5-oxoprolinase subunit A (254 aa).

The protein belongs to the LamB/PxpA family. In terms of assembly, forms a complex composed of PxpA, PxpB and PxpC.

The enzyme catalyses 5-oxo-L-proline + ATP + 2 H2O = L-glutamate + ADP + phosphate + H(+). Catalyzes the cleavage of 5-oxoproline to form L-glutamate coupled to the hydrolysis of ATP to ADP and inorganic phosphate. This Rhodopseudomonas palustris (strain BisB5) protein is 5-oxoprolinase subunit A.